The chain runs to 332 residues: Anthranilate phosphoribosyltransferase (332 aa).

5-phospho-alpha-D-ribose 1-diphosphate-binding positions include Gly78, Gly81–Asp82, Ser86, Asn88–Thr91, Lys106–Ser114, and Ser118. Residue Gly78 coordinates anthranilate. Ser90 contributes to the Mg(2+) binding site. Position 109 (Asn109) interacts with anthranilate. Arg163 lines the anthranilate pocket. Mg(2+)-binding residues include Asp222 and Glu223.

The protein belongs to the anthranilate phosphoribosyltransferase family. Homodimer. Mg(2+) is required as a cofactor.

It catalyses the reaction N-(5-phospho-beta-D-ribosyl)anthranilate + diphosphate = 5-phospho-alpha-D-ribose 1-diphosphate + anthranilate. It participates in amino-acid biosynthesis; L-tryptophan biosynthesis; L-tryptophan from chorismate: step 2/5. In terms of biological role, catalyzes the transfer of the phosphoribosyl group of 5-phosphorylribose-1-pyrophosphate (PRPP) to anthranilate to yield N-(5'-phosphoribosyl)-anthranilate (PRA). This Staphylococcus aureus (strain USA300) protein is Anthranilate phosphoribosyltransferase.